We begin with the raw amino-acid sequence, 865 residues long: Alanine--tRNA ligase (865 aa).

Positions 554, 558, 656, and 660 each coordinate Zn(2+).

This sequence belongs to the class-II aminoacyl-tRNA synthetase family. It depends on Zn(2+) as a cofactor.

It localises to the cytoplasm. It carries out the reaction tRNA(Ala) + L-alanine + ATP = L-alanyl-tRNA(Ala) + AMP + diphosphate. In terms of biological role, catalyzes the attachment of alanine to tRNA(Ala) in a two-step reaction: alanine is first activated by ATP to form Ala-AMP and then transferred to the acceptor end of tRNA(Ala). Also edits incorrectly charged Ser-tRNA(Ala) and Gly-tRNA(Ala) via its editing domain. This is Alanine--tRNA ligase from Francisella tularensis subsp. mediasiatica (strain FSC147).